We begin with the raw amino-acid sequence, 683 residues long: ATP-dependent zinc metalloprotease FtsH (683 aa).

The tract at residues 1-43 (MEDKNIKDDEILDDQNDNQEDVQNQDEEKEIKPKKPKKKVYIS) is disordered. Residues 1-70 (MEDKNIKDDE…KNNNISFRVK (70 aa)) lie on the Cytoplasmic side of the membrane. The span at 10 to 28 (EILDDQNDNQEDVQNQDEE) shows a compositional bias: acidic residues. The helical transmembrane segment at 71 to 91 (PPIFFFLILILMSTLFYFYGN) threads the bilayer. Topologically, residues 92 to 174 (KTALFQEKRE…IVVLGTPVSS (83 aa)) are periplasmic. A helical transmembrane segment spans residues 175–195 (IITRAIFSFAPLFMLLFFFYF). Residues 196–683 (INKKMMGSSG…LDDEQLEKYY (488 aa)) lie on the Cytoplasmic side of the membrane. 270 to 277 (GEPGTGKT) lines the ATP pocket. H494 is a Zn(2+) binding site. E495 is a catalytic residue. Zn(2+)-binding residues include H498 and D569.

The protein in the central section; belongs to the AAA ATPase family. This sequence in the C-terminal section; belongs to the peptidase M41 family. Homohexamer. The cofactor is Zn(2+).

Its subcellular location is the cell inner membrane. In terms of biological role, acts as a processive, ATP-dependent zinc metallopeptidase for both cytoplasmic and membrane proteins. Plays a role in the quality control of integral membrane proteins. This chain is ATP-dependent zinc metalloprotease FtsH, found in Streptobacillus moniliformis (strain ATCC 14647 / DSM 12112 / NCTC 10651 / 9901).